We begin with the raw amino-acid sequence, 300 residues long: 7-methylguanosine phosphate-specific 5'-nucleotidase (300 aa).

The active-site Nucleophile is the aspartate 41. 2 residues coordinate Mg(2+): aspartate 41 and aspartate 43. The active-site Proton donor is the aspartate 43. Residue glutamate 88 participates in CMP binding. Residue glutamate 88 participates in N(7)-methyl-GMP binding. Residues 156–157 (SA) and lysine 205 each bind substrate. Aspartate 230 contacts Mg(2+). Residue lysine 256 is modified to N6-acetyllysine.

Belongs to the pyrimidine 5'-nucleotidase family. In terms of assembly, monomer.

The protein localises to the cytoplasm. The enzyme catalyses N(7)-methyl-GMP + H2O = N(7)-methylguanosine + phosphate. The catalysed reaction is CMP + H2O = cytidine + phosphate. It catalyses the reaction a ribonucleoside 5'-phosphate + H2O = a ribonucleoside + phosphate. Functionally, specifically hydrolyzes 7-methylguanosine monophosphate (m(7)GMP) to 7-methylguanosine and inorganic phosphate. The specific activity for m(7)GMP may protect cells against undesired salvage of m(7)GMP and its incorporation into nucleic acids. Also has weak activity for CMP. UMP and purine nucleotides are poor substrates. The chain is 7-methylguanosine phosphate-specific 5'-nucleotidase (Nt5c3b) from Rattus norvegicus (Rat).